The sequence spans 132 residues: Transcriptional repressor SmtB homolog (132 aa).

Zn(2+)-binding residues include Cys-20, His-26, Cys-71, Cys-73, Asp-114, His-116, His-127, and Glu-130. Positions 38–132 (MSLDQAQQMA…EVADHLQESD (95 aa)) constitute an HTH arsR-type domain. The H-T-H motif DNA-binding region spans 72–91 (VCDLAAAMKVSESAVSHQLR).

In terms of assembly, homodimer.

Functionally, transcriptional repressor of the expression of the ziaA gene. Controls zinc homeostasis by triggering ZiaA-mediated efflux of excess zinc into the periplasm. The polypeptide is Transcriptional repressor SmtB homolog (ziaR) (Synechocystis sp. (strain ATCC 27184 / PCC 6803 / Kazusa)).